Here is a 391-residue protein sequence, read N- to C-terminus: S-adenosylmethionine synthase (391 aa).

Position 19 (His-19) interacts with ATP. Position 21 (Asp-21) interacts with Mg(2+). Glu-47 is a binding site for K(+). L-methionine is bound by residues Glu-60 and Gln-103. Positions 103 to 113 (QSADIAQGVDR) are flexible loop. ATP-binding positions include 168–170 (DGK), 236–237 (RF), Asp-245, 251–252 (RK), Ala-268, and Lys-272. An L-methionine-binding site is contributed by Asp-245. Lys-276 is a binding site for L-methionine.

It belongs to the AdoMet synthase family. Homotetramer; dimer of dimers. Mg(2+) is required as a cofactor. Requires K(+) as cofactor.

The protein resides in the cytoplasm. The enzyme catalyses L-methionine + ATP + H2O = S-adenosyl-L-methionine + phosphate + diphosphate. Its pathway is amino-acid biosynthesis; S-adenosyl-L-methionine biosynthesis; S-adenosyl-L-methionine from L-methionine: step 1/1. Its function is as follows. Catalyzes the formation of S-adenosylmethionine (AdoMet) from methionine and ATP. The overall synthetic reaction is composed of two sequential steps, AdoMet formation and the subsequent tripolyphosphate hydrolysis which occurs prior to release of AdoMet from the enzyme. This chain is S-adenosylmethionine synthase, found in Nitratidesulfovibrio vulgaris (strain ATCC 29579 / DSM 644 / CCUG 34227 / NCIMB 8303 / VKM B-1760 / Hildenborough) (Desulfovibrio vulgaris).